The primary structure comprises 306 residues: OVARIAN TUMOR DOMAIN-containing deubiquitinating enzyme 1 (306 aa).

Positions 81–295 (IGIRRTRGDG…PGHYDILYPK (215 aa)) constitute an OTU domain. The active site involves D89. C92 acts as the Nucleophile in catalysis. Catalysis depends on residues H259 and H288.

This sequence belongs to the peptidase C65 family.

It catalyses the reaction Thiol-dependent hydrolysis of ester, thioester, amide, peptide and isopeptide bonds formed by the C-terminal Gly of ubiquitin (a 76-residue protein attached to proteins as an intracellular targeting signal).. With respect to regulation, cleavage activities for 'Lys-48'- and 'Lys-63'-linked ubiquitin (UB) tetramers is inhibited by UB aldehyde and N-ethylmaleimide but not by the metalloprotease inhibitors 1,10-phenanthroline and EDTA, and the serine protease inhibitor phenylmethylsulfonyl fluoride. Functionally, hydrolase that can remove conjugated ubiquitin from proteins in vitro and may therefore play an important regulatory role at the level of protein turnover by preventing degradation. Cysteine protease with a preference for Met-1 and 'Lys-48' over 'Lys-63'-linked ubiquitin (UB) tetramers (e.g. Ub2, Ub3 and Ub4) as substrates. The sequence is that of OVARIAN TUMOR DOMAIN-containing deubiquitinating enzyme 1 from Arabidopsis thaliana (Mouse-ear cress).